The primary structure comprises 297 residues: Protoheme IX farnesyltransferase (297 aa).

A run of 9 helical transmembrane segments spans residues 26-46, 48-68, 96-116, 120-140, 147-167, 174-194, 218-238, 245-265, and 276-296; these read VTQLAVFCAVIGMFLATPGMV, YPVLFGGIVGIWLLAGAAFAV, LHIIIFSIILGSLGMIILWNF, LTMWLTLATFVGYAVIYTWLL, NIVIGGLSGAMPPALGWAAVT, AWHLVLIIFVWTPPHFWALAL, LLNIVLYTLILIAATMLPYIY, YLISAIILGLLFLAYVVALFI, and FRFSITYLSLLFAALLVDHYF.

Belongs to the UbiA prenyltransferase family. Protoheme IX farnesyltransferase subfamily.

It localises to the cell inner membrane. It catalyses the reaction heme b + (2E,6E)-farnesyl diphosphate + H2O = Fe(II)-heme o + diphosphate. It functions in the pathway porphyrin-containing compound metabolism; heme O biosynthesis; heme O from protoheme: step 1/1. Functionally, converts heme B (protoheme IX) to heme O by substitution of the vinyl group on carbon 2 of heme B porphyrin ring with a hydroxyethyl farnesyl side group. The sequence is that of Protoheme IX farnesyltransferase from Polynucleobacter necessarius subsp. necessarius (strain STIR1).